A 316-amino-acid polypeptide reads, in one-letter code: Probable cell division protein WhiA (316 aa).

The H-T-H motif DNA-binding region spans Thr275–Ala309.

It belongs to the WhiA family.

Involved in cell division and chromosome segregation. This is Probable cell division protein WhiA from Bacillus anthracis (strain CDC 684 / NRRL 3495).